The primary structure comprises 115 residues: Fluoride-specific ion channel FluC 4 (115 aa).

The next 2 membrane-spanning stretches (helical) occupy residues 19 to 39 (WGTF…AGLG) and 42 to 62 (LGGI…LLGG). Na(+) is bound by residues G61 and T64. A helical membrane pass occupies residues 89 to 109 (IVASALLCVLAVAAGYGGIMW).

This sequence belongs to the fluoride channel Fluc/FEX (TC 1.A.43) family.

The protein resides in the cell inner membrane. The catalysed reaction is fluoride(in) = fluoride(out). With respect to regulation, na(+) is not transported, but it plays an essential structural role and its presence is essential for fluoride channel function. Its function is as follows. Fluoride-specific ion channel. Important for reducing fluoride concentration in the cell, thus reducing its toxicity. This is Fluoride-specific ion channel FluC 4 from Brucella melitensis biotype 1 (strain ATCC 23456 / CCUG 17765 / NCTC 10094 / 16M).